Reading from the N-terminus, the 95-residue chain is uncharacterized protein (95 aa).

A helical membrane pass occupies residues 12–32 (LASLIVSMVVLVVGLALWFFV). The interval 66–87 (ANEPEKEAEPATAASEPKEDED) is disordered.

It is found in the cell membrane. This is an uncharacterized protein from Salmonella typhi.